The primary structure comprises 24 residues: Protein YriA (24 aa).

This is Protein YriA from Escherichia coli (strain K12).